The primary structure comprises 788 residues: LPS-assembly protein LptD (788 aa).

The first 23 residues, 1–23 (MSLTSRSLLATMISLALYGPAMA), serve as a signal peptide directing secretion.

This sequence belongs to the LptD family. Component of the lipopolysaccharide transport and assembly complex. Interacts with LptE and LptA.

It localises to the cell outer membrane. Functionally, together with LptE, is involved in the assembly of lipopolysaccharide (LPS) at the surface of the outer membrane. The chain is LPS-assembly protein LptD from Photobacterium profundum (strain SS9).